A 215-amino-acid chain; its full sequence is 3-demethoxyubiquinol 3-hydroxylase (215 aa).

Residues glutamate 64, glutamate 94, histidine 97, glutamate 146, glutamate 178, and histidine 181 each coordinate Fe cation.

The protein belongs to the COQ7 family. Requires Fe cation as cofactor.

It localises to the cell membrane. It carries out the reaction a 5-methoxy-2-methyl-3-(all-trans-polyprenyl)benzene-1,4-diol + AH2 + O2 = a 3-demethylubiquinol + A + H2O. It functions in the pathway cofactor biosynthesis; ubiquinone biosynthesis. Its function is as follows. Catalyzes the hydroxylation of 2-nonaprenyl-3-methyl-6-methoxy-1,4-benzoquinol during ubiquinone biosynthesis. The polypeptide is 3-demethoxyubiquinol 3-hydroxylase (Coxiella burnetii (strain CbuG_Q212) (Coxiella burnetii (strain Q212))).